Consider the following 508-residue polypeptide: Histidine ammonia-lyase (508 aa).

A cross-link (5-imidazolinone (Ala-Gly)) is located at residues 143–145; the sequence is ASG. 2,3-didehydroalanine (Ser) is present on S144.

It belongs to the PAL/histidase family. Contains an active site 4-methylidene-imidazol-5-one (MIO), which is formed autocatalytically by cyclization and dehydration of residues Ala-Ser-Gly.

It localises to the cytoplasm. The enzyme catalyses L-histidine = trans-urocanate + NH4(+). The protein operates within amino-acid degradation; L-histidine degradation into L-glutamate; N-formimidoyl-L-glutamate from L-histidine: step 1/3. The sequence is that of Histidine ammonia-lyase from Caldanaerobacter subterraneus subsp. tengcongensis (strain DSM 15242 / JCM 11007 / NBRC 100824 / MB4) (Thermoanaerobacter tengcongensis).